The sequence spans 202 residues: dTTP/UTP pyrophosphatase (202 aa).

Aspartate 71 acts as the Proton acceptor in catalysis.

Belongs to the Maf family. YhdE subfamily. The cofactor is a divalent metal cation.

It is found in the cytoplasm. It carries out the reaction dTTP + H2O = dTMP + diphosphate + H(+). The enzyme catalyses UTP + H2O = UMP + diphosphate + H(+). In terms of biological role, nucleoside triphosphate pyrophosphatase that hydrolyzes dTTP and UTP. May have a dual role in cell division arrest and in preventing the incorporation of modified nucleotides into cellular nucleic acids. The polypeptide is dTTP/UTP pyrophosphatase (Zymomonas mobilis subsp. mobilis (strain ATCC 31821 / ZM4 / CP4)).